We begin with the raw amino-acid sequence, 214 residues long: tRNA (guanine-N(7)-)-methyltransferase (214 aa).

Residues E43, E68, N99, and D121 each contribute to the S-adenosyl-L-methionine site. D121 is a catalytic residue. Substrate-binding positions include K125, D157, and 194 to 197 (TEYE).

Belongs to the class I-like SAM-binding methyltransferase superfamily. TrmB family.

It catalyses the reaction guanosine(46) in tRNA + S-adenosyl-L-methionine = N(7)-methylguanosine(46) in tRNA + S-adenosyl-L-homocysteine. It functions in the pathway tRNA modification; N(7)-methylguanine-tRNA biosynthesis. In terms of biological role, catalyzes the formation of N(7)-methylguanine at position 46 (m7G46) in tRNA. The protein is tRNA (guanine-N(7)-)-methyltransferase of Alkaliphilus metalliredigens (strain QYMF).